The primary structure comprises 1345 residues: Aldehyde oxidase 2 (1345 aa).

The 2Fe-2S ferredoxin-type domain maps to 9–96; the sequence is DDLEFFVNGR…GAAVTTVEGV (88 aa). Residues Cys-48, Cys-53, Cys-56, and Cys-78 each coordinate [2Fe-2S] cluster. Residue Gln-117 coordinates Mo-molybdopterin. [2Fe-2S] cluster contacts are provided by Cys-118, Cys-121, Cys-153, and Cys-155. Position 155 (Cys-155) interacts with Mo-molybdopterin. Positions 238–423 constitute an FAD-binding PCMH-type domain; sequence FYGERITWIA…GSVYIPHSQK (186 aa). FAD contacts are provided by residues 266 to 273, Ala-347, Ser-356, His-360, Asp-369, and Leu-413; that span reads LISGNTAL. Mo-molybdopterin-binding positions include 812-813, 1094-1097, Gln-1209, and Leu-1274; these read GF and ASVG. Residue Glu-1276 is the Proton acceptor; for azaheterocycle hydroxylase activity of the active site.

This sequence belongs to the xanthine dehydrogenase family. As to quaternary structure, homodimer. [2Fe-2S] cluster serves as cofactor. FAD is required as a cofactor. Requires Mo-molybdopterin as cofactor. Expressed in olfactory mucosa epithelium (at protein level). Detected in skin.

It localises to the cytoplasm. The catalysed reaction is an aldehyde + O2 + H2O = a carboxylate + H2O2 + H(+). In terms of biological role, oxidase with broad substrate specificity, oxidizing aromatic azaheterocycles, such as phthalazine, as well as aldehydes, such as benzaldehyde and retinal. Cannot use hypoxanthine as substrate. The polypeptide is Aldehyde oxidase 2 (Aox2) (Mus musculus (Mouse)).